The sequence spans 419 residues: Histone acetyltransferase type B catalytic subunit (419 aa).

An N-acetylalanine modification is found at Ala-2. An N6-acetyllysine mark is found at Lys-9 and Lys-15. An interaction with histone H4 N-terminus region spans residues 62-64; the sequence is DDE. Ser-190 is subject to Phosphoserine; by AMPK. The interaction with histone H4 N-terminus stretch occupies residues 225–227; it reads YNY. Residues 241 to 243 and 248 to 254 each bind acetyl-CoA; these read MLI and QGQGHGA. Catalysis depends on Glu-276, which acts as the Proton donor/acceptor. The residue at position 343 (Ser-343) is a Phosphoserine.

Belongs to the HAT1 family. Catalytic subunit of the type B histone acetyltransferase (HAT) complex, composed of RBBP7 and HAT1. Interacts with histones H4 and H2A. The interaction is dependent of the ability of RBBP7 to bind to the N-terminus of histones. Component of the histone H3.1 and H3.3 complexes. Phosphorylated by AMPK at Ser-190; phosphorylation increases HAT1 activity.

It is found in the nucleus matrix. Its subcellular location is the mitochondrion. The protein localises to the cytoplasm. It localises to the nucleus. The protein resides in the nucleoplasm. It carries out the reaction L-lysyl-[protein] + acetyl-CoA = N(6)-acetyl-L-lysyl-[protein] + CoA + H(+). In terms of biological role, histone acetyltransferase that plays a role in different biological processes including cell cycle progression, glucose metabolism, histone production or DNA damage repair. Coordinates histone production and acetylation via H4 promoter binding. Acetylates histone H4 at 'Lys-5' (H4K5ac) and 'Lys-12' (H4K12ac) and, to a lesser extent, histone H2A at 'Lys-5' (H2AK5ac). Drives H4 production by chromatin binding to support chromatin replication and acetylation. Since transcription of H4 genes is tightly coupled to S-phase, plays an important role in S-phase entry and progression. Promotes homologous recombination in DNA repair by facilitating histone turnover and incorporation of acetylated H3.3 at sites of double-strand breaks. In addition, acetylates other substrates such as chromatin-related proteins. Also acetylates RSAD2 which mediates the interaction of ubiquitin ligase UBE4A with RSAD2 leading to RSAD2 ubiquitination and subsequent degradation. (Microbial infection) Contributes to hepatitis B virus (HBV) replication by acetylating histone H4 at the sites of 'Lys-5' and 'Lys-12' on the covalently closed circular DNA (cccDNA) minichromosome leading to its accumulation within the host cell. This is Histone acetyltransferase type B catalytic subunit (HAT1) from Homo sapiens (Human).